Consider the following 440-residue polypeptide: Tetratricopeptide repeat protein 5 (440 aa).

TPR repeat units lie at residues 7-61, 68-98, 103-130, 136-174, and 179-216; these read EEVK…EEVV, AQVL…AVKL, VEAW…SGAL, KVSL…AVQM, and GRSW…AEKV. The Nuclear export signal motif lies at 13-24; the sequence is LQKLQELVDQLY. Ser203 is modified (phosphoserine; by ATM). Residue Ser221 is modified to Phosphoserine; by CHEK2. The TPR 6 repeat unit spans residues 224–253; the sequence is PDLHLNRATLHKYEENYGEALEGFSRAAAL. The interval 285 to 287 is mediates interaction with 28S rRNA of ribosome-coding tubulin; it reads KTK.

As to quaternary structure, interacts with JMY and p300/EP300; the interaction occurs in the nucleus and augments the association between JMY and p300/EP300 in response to DNA damage. Interacts with PRMT5; the interaction is DNA damage-dependent and promotes PRMT5 interaction with p53/TP53 and subsequent methylation. Forms a complex with HSF1 and p300/EP300; these interactions augment chromatin-bound HSF1 and p300/EP300 histone acetyltransferase activity, resulting in enhanced heat-shock-responsive transcription. Interacts with JMY; the interaction occurs in the cytoplasm and results in the inhibition of JYM's nucleation activity. Interacts with ribosome-coding tubulin (via 60S subunit 28S rRNA and protein uL24/RPL26) and the N-terminal of nascent tubulin polypeptide (via alpha-tubulin MREC motif and beta-tubulin MREI motif); these interactions result in tubulin mRNA-targeted degradation. Interacts with ATP5F1B; the interaction occurs in the mitochondria and results in ATP production decrease. Interacts with p53/TP53; the interaction occurs in the mitochondria and results in increased apoptosis. Post-translationally, phosphorylation by ATM kinase induces nuclear accumulation while interfering with nuclear export, and phosphorylation by CHEK2 kinase enhances nuclear stability.

The protein resides in the nucleus. Its subcellular location is the cytoplasm. The protein localises to the cytoplasmic vesicle. It is found in the mitochondrion matrix. In terms of biological role, cofactor involved in the regulation of various cellular mechanisms such as actin regulation, autophagy, chromatin regulation and DNA repair. In physiological conditions, interacts with cofactor JMY in the cytoplasm which prevents JMY's actin nucleation activity and ability to activate the Arp2/3 complex. Acts as a negative regulator of nutrient stress-induced autophagy by inhibiting JMY's interaction with MAP1LC3B, thereby preventing autophagosome formation. Involves in tubulin autoregulation by promoting its degradation in response to excess soluble tubulin. To do so, associates with the active ribosome near the ribosome exit tunnel and with nascent tubulin polypeptides early during their translation, triggering tubulin mRNA-targeted degradation. Following DNA damage, phosphorylated by DNA damage responsive protein kinases ATM and CHEK2, leading to its nuclear accumulation and stability. Nuclear TTC5/STRAP promotes the assembly of a stress-responsive p53/TP53 coactivator complex, which includes the coactivators JMY and p300, thereby increasing p53/TP53-dependent transcription and apoptosis. Also recruits arginine methyltransferase PRMT5 to p53/TP53 when DNA is damaged, allowing PRMT5 to methylate p53/TP53. In DNA stress conditions, also prevents p53/TP53 degradation by E3 ubiquitin ligase MDM2. Upon heat-shock stress, forms a chromatin-associated complex with heat-shock factor 1 HSF1 and p300/EP300 to stimulate heat-shock-responsive transcription, thereby increasing cell survival. Mitochondrial TTC5/STRAP interacts with ATP synthase subunit beta ATP5F1B which decreased ATP synthase activity and lowers mitochondrial ATP production, thereby regulating cellular respiration and mitochondrial-dependent apoptosis. Mitochondrial TTC5/STRAP also regulates p53/TP53-mediated apoptosis. The sequence is that of Tetratricopeptide repeat protein 5 (TTC5) from Bos taurus (Bovine).